We begin with the raw amino-acid sequence, 332 residues long: GTP 3',8-cyclase (332 aa).

A Radical SAM core domain is found at 7 to 221 (QYERLHDYVR…FDLCKQAGLD (215 aa)). Arginine 16 contributes to the GTP binding site. [4Fe-4S] cluster contacts are provided by cysteine 23 and cysteine 27. Residue tyrosine 29 participates in S-adenosyl-L-methionine binding. Cysteine 30 serves as a coordination point for [4Fe-4S] cluster. Arginine 66 serves as a coordination point for GTP. Glycine 70 is an S-adenosyl-L-methionine binding site. Threonine 97 is a binding site for GTP. Residue serine 121 participates in S-adenosyl-L-methionine binding. Lysine 158 provides a ligand contact to GTP. Residue methionine 192 participates in S-adenosyl-L-methionine binding. Cysteine 256 and cysteine 259 together coordinate [4Fe-4S] cluster. 261-263 (RLR) is a GTP binding site. Residue cysteine 273 coordinates [4Fe-4S] cluster.

It belongs to the radical SAM superfamily. MoaA family. As to quaternary structure, monomer and homodimer. [4Fe-4S] cluster serves as cofactor.

The enzyme catalyses GTP + AH2 + S-adenosyl-L-methionine = (8S)-3',8-cyclo-7,8-dihydroguanosine 5'-triphosphate + 5'-deoxyadenosine + L-methionine + A + H(+). It functions in the pathway cofactor biosynthesis; molybdopterin biosynthesis. Functionally, catalyzes the cyclization of GTP to (8S)-3',8-cyclo-7,8-dihydroguanosine 5'-triphosphate. The protein is GTP 3',8-cyclase of Limosilactobacillus fermentum (strain NBRC 3956 / LMG 18251) (Lactobacillus fermentum).